The chain runs to 1603 residues: Protein TIC 214 (1603 aa).

The next 6 membrane-spanning stretches (helical) occupy residues 11-31, 58-78, 86-106, 131-151, 167-187, and 213-233; these read VLWA…LFGL, LSGT…FLSI, LLLK…FYWY, IFFD…SPIL, LFVL…FNCI, and FSIF…VPFF.

Belongs to the TIC214 family. In terms of assembly, part of the Tic complex.

The protein localises to the plastid. The protein resides in the chloroplast inner membrane. In terms of biological role, involved in protein precursor import into chloroplasts. May be part of an intermediate translocation complex acting as a protein-conducting channel at the inner envelope. The polypeptide is Protein TIC 214 (Physcomitrium patens (Spreading-leaved earth moss)).